Consider the following 244-residue polypeptide: Ethylene-responsive transcription factor 1 (244 aa).

A DNA-binding region (AP2/ERF) is located at residues 106–164 (HYRGVRQRPWGKFAAEIRDPAKNGARVWLGTYESAEEAALAYGKAAFRMRGTKALLNFP). Low complexity predominate over residues 186–198 (SASSSVSSASESG). Residues 186–214 (SASSSVSSASESGSPKRRRKGVAAKQAEL) form a disordered region.

The protein belongs to the ethylene-response factor family. Class 1 subfamily. In terms of tissue distribution, present in stems.

The protein localises to the nucleus. Its function is as follows. Involved in the regulation of gene expression during fruit ripening, by stress factors and by components of stress signal transduction pathways. Transcription factor that binds to the GCC-box pathogenesis-related promoter element. Probably acts as a transcriptional activator and may be involved in disease resistance pathways. In Solanum lycopersicum (Tomato), this protein is Ethylene-responsive transcription factor 1 (ERF1).